The chain runs to 375 residues: Circadian-associated transcriptional repressor (375 aa).

Positions 1 to 32 (MDSPSSVSSYSSSSLSPSFSTSSVNSDFSFPS) are enriched in low complexity. Disordered stretches follow at residues 1 to 102 (MDSP…LNTQ), 192 to 218 (KSSSGGSRHQISKHFPSHHGDPGAASP), and 351 to 375 (DREMTKGHPEPQMTSHPPVAPDPQP). Residues 33 to 46 (DNEREGKGTHELRP) are compositionally biased toward basic and acidic residues.

Interacts with BMAL1, PER2, CRY2, BHLHE41, HDAC1 NR3C1.

The protein resides in the nucleus. It is found in the PML body. In terms of biological role, transcriptional repressor which forms a negative regulatory component of the circadian clock and acts independently of the circadian transcriptional repressors: CRY1, CRY2 and BHLHE41. In a histone deacetylase-dependent manner represses the transcriptional activator activity of the CLOCK-BMAL1 heterodimer. Abrogates the interaction of BMAL1 with the transcriptional coactivator CREBBP and can repress the histone acetyl-transferase activity of the CLOCK-BMAL1 heterodimer, reducing histone acetylation of its target genes. Rhythmically binds the E-box elements (5'-CACGTG-3') on circadian gene promoters and its occupancy shows circadian oscillation antiphasic to BMAL1. Interacts with the glucocorticoid receptor (NR3C1) and contributes to the repressive function in the glucocorticoid response. The polypeptide is Circadian-associated transcriptional repressor (Ciart) (Mus musculus (Mouse)).